The following is a 63-amino-acid chain: Conotoxin Pu5.4 (63 aa).

The signal sequence occupies residues 1–22 (MRCVPVFVILLLLIASTPSVDA). The propeptide occupies 23-50 (TQKTKDDMSLASFHDNAKRFLQTLRNTR). A Tryptophan amide modification is found at W62.

Belongs to the conotoxin T superfamily. Contains 2 disulfide bonds that can be either 'C1-C3, C2-C4' or 'C1-C4, C2-C3', since these disulfide connectivities have been observed for conotoxins with cysteine framework V (for examples, see AC P0DQQ7 and AC P81755). Expressed by the venom duct.

Its subcellular location is the secreted. The sequence is that of Conotoxin Pu5.4 from Conus pulicarius (Flea-bitten cone).